The chain runs to 431 residues: Histidine--tRNA ligase (431 aa).

The disordered stretch occupies residues 1–20 (MALQRPKGTQDHLPDGSPKL).

Belongs to the class-II aminoacyl-tRNA synthetase family. As to quaternary structure, homodimer.

The protein resides in the cytoplasm. The catalysed reaction is tRNA(His) + L-histidine + ATP = L-histidyl-tRNA(His) + AMP + diphosphate + H(+). This Deinococcus geothermalis (strain DSM 11300 / CIP 105573 / AG-3a) protein is Histidine--tRNA ligase.